The chain runs to 2761 residues: MSFSFEVSVIVTGLSSLKLKTRNDSLDNLNLLLKTSPTEVPVKAFSPILDAIITIIESEKTRYEKTRLENGKDARIELYENRLGSAAYTLRLFVERNCERFKPKHIKLLSMTLFELMTRPRSRSLITSVADHLTYSLVALCGSPVFQCNFELHQWISLSHDISDAVTYHLDVSYNDKIIANLLQTLLELFQIDTIGIEDIATPVVRMTIKYLTLITKENTNTRTILTLVNSAILRLHLIRFQDVINLSYYTIKHLLRIKLTNENNIGEIARFNLMISEVLYNKTPIIVGEDKDQSYVNKEKLLPALQDYLIHSLKQYDHTKFTLDCVTFIDGPASSKFNWYSFSDICQNEKNCLEDIWLYALSLTMMLKANYQFLEYKESSLAGGSLLFKRRKVKDTFAHMLKDSLTYDDFLCNCIDSDSIKIKTTGLHIGLLYLSIFDCSNIELSHLKEELFRCSQDVRFMLLCLSCFIPMCSQSKNSFSPEEEIRLFKMCVPLLKTSNGCKTACSLLYKLIEFQLEPIKDKSVLQQMSDLYLLSDVNGPALVCNESFKFWMHLHYYAKTFQTVKSPITYVFSWLYARWDQLFTLVVSETHFYVFASWLCGCTHTTFPTFEYSRPSLFHDTWMGLSEERASITGFSLTIRTIELRKQKFAPVFCEEAERVRFMYKLFDLIDESAISATFIDRAIQVLRTIESLVGQRNYTDYLSRFKEIFLLSSSVIDFGQNAQIFSVMEGMISLKDSLLRHIIMDILPTEKVLSTFMQRLAEHTQQTSHQDEFLSHHAKPEAGSIPISEMIEIGFEFALQVHSVSKAFDPLSSFILYSKKLSLPMLNRTLPNLITYLENNENEIPTASLERLTQFLGSSLLAPSFDTSSTSMKLLTRYLEGISKYWVMEDRSQVLTADCNDIFDWIVTQYDESSFSGVEALYELARFMTLLLEKYNLSNSSISGGKQRVFKILSGCITRLPKYLTNRVVSLLGTYVKRVGVTNQRILFKELLQRFNPPQESVETAAFFSLTCTKLSLINEFYLLNSILHLLDNTNFSHLLLYVEKSLDTISTFYGLCSKQDLFHQCRYFIIDQWFTKSAKSKIYEPSIWKVELFEFEFDEFCIRYQMELTSFFFAKSSTYYYIIDHLKKLLNLKQEALLTKYIAPTIALSYVDSGVKDLIFDIAADLLGRKFPNVLTINLDDVIYYFIKLSDLSNLATSLTFWCKIFNSSRFTNMLHYNSSNCMQLNDNVAIAFPIVYKVLKKNVFTDIDDGRSFEYVIQRLVMDLQNCVLIDQKIRVLRQIKLLVLFFEHKLTLFKDIDFFLLELSKFLFNADIFSEVYGFILDLLEFSANNKMDVARSLTELMRFCFTVTDSNVKKTLFPKVNPVLFNFCVSDGKQLYATCYALLTLETNSFGWNDIAQVFKFQEVDRTSVSLLSDLFDNFDYDGSFDANLISPTTIQNLISIPRDNARVSDKFRRWLGNILGEIVYTRPYDHIIPHHCSTLDLESGISGLLQILWVQYQKADDISLRFLLDHIQSIILQDESVLAEISSDSYSSLVNLKNLTDISWEKFENCHGMLNIKLGETFLTLTFTDRSCHYQKWISAFICNILLVIVEKFPSFRILALLCDNTAFLHSAIISQLIKILLVSFPKQRSSFLSDILNRADEIFKTEDRTLKMEVITKVFSIIRGMALNGVQNALYVYDKIKLQPVIPIMLSLGSEIWSLMIYEEFYGEYCTGKMLDYELLYQIYSKIDEKDLFYGLPLSSSLASSLTLISKTKFNSYTNFALSNGRFEEGLRNKDSSCLHEFASVTSSNGFTGLATMLDSNFENPLLSANQYSWALKLNKWDLPIPEARDSFAKSAFSILKDVKEIPDFFSFDDHILKVMDGGSLLKNSQLNLETMESLGLLVSLKKLGSADMNTLTTLNNLRVHDTLNADYLPENVFDILHWSRHFFIESKINNTSVIEHAPGSNFTLQLAKILNLVHASTFCRDQGRFQDLINIVMTLEAAVDDITNNPAIGPSDTITLFCKRISTVESARMLWANKESAMAINMLEDLLQTNLTAVNVENVSLADVQDILMPDAVVDSQLVEWSSFSRHRSPDVIFNDHILYYERDVLNINEPNLRSSICYTYAEFCYKQSQKVDEGELLYLKQKIAKASNQLQEISSIYKNPKLRDAERKEAKRHHNRLSLQNHHDKDRYNKISSSRIAFVSQALHFFLTTLVHSNSRDAEVVDKFCSLWFSYSTDDIINSKLQKEIGTVPSFKFLPWVSQMASKLADSVSPFQDTLQLTLKRMLYKLPYETLYPLISMSLQDSESKVIDPVTKSRVEVVNKIIAALDMYDSGRYGSQFTRPVQAFCSMSVALACHKIPPKMKFLQLDTLNIGKYWLETLPKVHLPLPTLPVKITCSQDGRREGRSYISSIDPKVLISSSGLSLPKIATFTVSDGTRHRVLLKGSNDDLRQDAIMEQVFKQVNKILKANKTTRKQNLSVRTYEVIPLGPRAGLIEFVANSMSLHDILLNLHCNDEISFDKARKTMKAAQNHSVEERVLTFSRITEKIKPQLRRFFFQSFVHAHDWYESRNRYTKSVVTSSIVGYLLGLGDRHLNNILIDIKTGEPIHIDLGVAFDQGKLLPIPELVPFRLTRDIVDGFGVAGIEGLFRNNCERVFKVLQDEKERLLCVLNVLKWDPLYSWKMTPLKKQRLQAKFTGDYDEEEISVSDADFSELLEEDNNNDESIRALKGVESKLYGDGLSVEAIVQELLSSATDKQNLATIYMGWSPFY.

In terms of domain architecture, FAT spans proline 1692 to glutamine 2294. The region spanning aspartate 2404 to asparagine 2710 is the PI3K/PI4K catalytic domain. A G-loop region spans residues serine 2410–leucine 2416. Residues glycine 2579–asparagine 2587 form a catalytic loop region. The segment at histidine 2599–threonine 2623 is activation loop. The 33-residue stretch at aspartate 2729 to tyrosine 2761 folds into the FATC domain.

Belongs to the PI3/PI4-kinase family. ATM subfamily. In terms of assembly, associates with DNA double-strand breaks.

It is found in the nucleus. It localises to the chromosome. Its subcellular location is the telomere. The catalysed reaction is L-seryl-[protein] + ATP = O-phospho-L-seryl-[protein] + ADP + H(+). It carries out the reaction L-threonyl-[protein] + ATP = O-phospho-L-threonyl-[protein] + ADP + H(+). In terms of biological role, serine/threonine protein kinase which activates checkpoint signaling upon genotoxic stresses such as ionizing radiation (IR), ultraviolet light (UV), or DNA replication stalling, thereby acting as a DNA damage sensor. Recognizes the substrate consensus sequence [ST]-Q. Phosphorylates histone H2A to form H2AS128ph (gamma-H2A) at sites of DNA damage, involved in the regulation of DNA damage response mechanism. Required for the control of telomere length and genome stability. This chain is Serine/threonine-protein kinase TEL1 (TEL1), found in Kluyveromyces lactis (strain ATCC 8585 / CBS 2359 / DSM 70799 / NBRC 1267 / NRRL Y-1140 / WM37) (Yeast).